Reading from the N-terminus, the 249-residue chain is uncharacterized protein (249 aa).

7-14 (GKGGCGKS) is a binding site for ATP.

This is an uncharacterized protein from Methanocaldococcus jannaschii (strain ATCC 43067 / DSM 2661 / JAL-1 / JCM 10045 / NBRC 100440) (Methanococcus jannaschii).